Consider the following 396-residue polypeptide: MINVYSNLMSAWPATMAMSPKLNRNMPTFSQIWDYERITPASAAGETLKSIQGAIGEYFERRHFFNEIVTGGQKTLYEMMPPSAAKAFTEAFFQISSLTRDEIITHKFKTVRAFNLFSLEQQEIPAVIIALDNITAADDLKFYPDRDTCGCSFHGSLNDAIEGSLCEFMETQSLLLYWLQGKANTEISSEIVTGINHIDEILLALRSEGDIRIFDITLPGAPGHAVLTLYGTKNKISRIKYSTGLSYANSLKKALCKSVVELWQSYICLHNFLIGGYTDDDIIDSYQRHFMSCNKYESFTDLCENTVLLSDDVKLTLEENITSDTNLLNYLQQISDNIFVYYARERVSNSLVWYTKIVSPDFFLHMNNSGAININNKIYHTGDGIKVRESKMVPFP.

The YcaO domain maps to 41–396 (ASAAGETLKS…VRESKMVPFP (356 aa)).

It localises to the cytoplasm. Its function is as follows. Necessary to process the inactive microcin B17 (McbA) precursor into the active peptide. The protein is Microcin B17-processing protein McbD (mcbD) of Escherichia coli.